A 107-amino-acid chain; its full sequence is MKKIVFLMLALSGFAFAAEGSMNQWLASFSILAAGLGLGVAALGGAIGMGNTAAATIAGTARNPGLGGKLMTTMFIALAMIEAQVIYALVIALIALYANPFQALVAA.

Transmembrane regions (helical) follow at residues 4–24, 29–49, and 74–94; these read IVFL…SMNQ, FSIL…AIGM, and MFIA…IALI.

Belongs to the ATPase C chain family. As to quaternary structure, F-type ATPases have 2 components, F(1) - the catalytic core - and F(0) - the membrane proton channel. F(1) has five subunits: alpha(3), beta(3), gamma(1), delta(1), epsilon(1). F(0) has three main subunits: a(1), b(2) and c(10-14). The alpha and beta chains form an alternating ring which encloses part of the gamma chain. F(1) is attached to F(0) by a central stalk formed by the gamma and epsilon chains, while a peripheral stalk is formed by the delta and b chains.

Its subcellular location is the cell inner membrane. In terms of biological role, f(1)F(0) ATP synthase produces ATP from ADP in the presence of a proton or sodium gradient. F-type ATPases consist of two structural domains, F(1) containing the extramembraneous catalytic core and F(0) containing the membrane proton channel, linked together by a central stalk and a peripheral stalk. During catalysis, ATP synthesis in the catalytic domain of F(1) is coupled via a rotary mechanism of the central stalk subunits to proton translocation. Key component of the F(0) channel; it plays a direct role in translocation across the membrane. A homomeric c-ring of between 10-14 subunits forms the central stalk rotor element with the F(1) delta and epsilon subunits. The polypeptide is ATP synthase subunit c (Campylobacter lari (strain RM2100 / D67 / ATCC BAA-1060)).